The following is a 128-amino-acid chain: UPF0102 protein PSPTO_4420 (128 aa).

Belongs to the UPF0102 family.

The chain is UPF0102 protein PSPTO_4420 from Pseudomonas syringae pv. tomato (strain ATCC BAA-871 / DC3000).